The primary structure comprises 355 residues: Phosphoribosylformylglycinamidine cyclo-ligase (355 aa).

Belongs to the AIR synthase family.

It is found in the cytoplasm. It catalyses the reaction 2-formamido-N(1)-(5-O-phospho-beta-D-ribosyl)acetamidine + ATP = 5-amino-1-(5-phospho-beta-D-ribosyl)imidazole + ADP + phosphate + H(+). The protein operates within purine metabolism; IMP biosynthesis via de novo pathway; 5-amino-1-(5-phospho-D-ribosyl)imidazole from N(2)-formyl-N(1)-(5-phospho-D-ribosyl)glycinamide: step 2/2. The protein is Phosphoribosylformylglycinamidine cyclo-ligase of Methylobacterium sp. (strain 4-46).